Consider the following 357-residue polypeptide: Holliday junction branch migration complex subunit RuvB (357 aa).

The tract at residues 1 to 27 (MGRFSNADGPGDDADEREVTPALTVGE) is disordered. Residues 1-195 (MGRFSNADGP…FGFTAHMDFY (195 aa)) form a large ATPase domain (RuvB-L) region. ATP is bound by residues leucine 34, arginine 35, glycine 76, lysine 79, threonine 80, serine 81, 142-144 (EDF), arginine 185, tyrosine 195, and arginine 232. Threonine 80 lines the Mg(2+) pocket. Residues 196–266 (EPAELERVLA…IAKYALEVYD (71 aa)) are small ATPAse domain (RuvB-S). Positions 269-357 (ELGLDRLDRA…GGLGQVGLFE (89 aa)) are head domain (RuvB-H). Residues arginine 324 and arginine 329 each coordinate DNA.

Belongs to the RuvB family. In terms of assembly, homohexamer. Forms an RuvA(8)-RuvB(12)-Holliday junction (HJ) complex. HJ DNA is sandwiched between 2 RuvA tetramers; dsDNA enters through RuvA and exits via RuvB. An RuvB hexamer assembles on each DNA strand where it exits the tetramer. Each RuvB hexamer is contacted by two RuvA subunits (via domain III) on 2 adjacent RuvB subunits; this complex drives branch migration. In the full resolvosome a probable DNA-RuvA(4)-RuvB(12)-RuvC(2) complex forms which resolves the HJ.

The protein resides in the cytoplasm. The catalysed reaction is ATP + H2O = ADP + phosphate + H(+). Functionally, the RuvA-RuvB-RuvC complex processes Holliday junction (HJ) DNA during genetic recombination and DNA repair, while the RuvA-RuvB complex plays an important role in the rescue of blocked DNA replication forks via replication fork reversal (RFR). RuvA specifically binds to HJ cruciform DNA, conferring on it an open structure. The RuvB hexamer acts as an ATP-dependent pump, pulling dsDNA into and through the RuvAB complex. RuvB forms 2 homohexamers on either side of HJ DNA bound by 1 or 2 RuvA tetramers; 4 subunits per hexamer contact DNA at a time. Coordinated motions by a converter formed by DNA-disengaged RuvB subunits stimulates ATP hydrolysis and nucleotide exchange. Immobilization of the converter enables RuvB to convert the ATP-contained energy into a lever motion, pulling 2 nucleotides of DNA out of the RuvA tetramer per ATP hydrolyzed, thus driving DNA branch migration. The RuvB motors rotate together with the DNA substrate, which together with the progressing nucleotide cycle form the mechanistic basis for DNA recombination by continuous HJ branch migration. Branch migration allows RuvC to scan DNA until it finds its consensus sequence, where it cleaves and resolves cruciform DNA. This Mycolicibacterium gilvum (strain PYR-GCK) (Mycobacterium gilvum (strain PYR-GCK)) protein is Holliday junction branch migration complex subunit RuvB.